We begin with the raw amino-acid sequence, 242 residues long: 3-dehydroquinate dehydratase (242 aa).

Residues 39-41 (EIR) and R73 each bind 3-dehydroquinate. H135 functions as the Proton donor/acceptor in the catalytic mechanism. The active-site Schiff-base intermediate with substrate is the K162. 3-dehydroquinate is bound by residues R203 and Q228.

The protein belongs to the type-I 3-dehydroquinase family. As to quaternary structure, homodimer.

The catalysed reaction is 3-dehydroquinate = 3-dehydroshikimate + H2O. It participates in metabolic intermediate biosynthesis; chorismate biosynthesis; chorismate from D-erythrose 4-phosphate and phosphoenolpyruvate: step 3/7. Its function is as follows. Involved in the third step of the chorismate pathway, which leads to the biosynthesis of aromatic amino acids. Catalyzes the cis-dehydration of 3-dehydroquinate (DHQ) and introduces the first double bond of the aromatic ring to yield 3-dehydroshikimate. This Methanosarcina mazei (strain ATCC BAA-159 / DSM 3647 / Goe1 / Go1 / JCM 11833 / OCM 88) (Methanosarcina frisia) protein is 3-dehydroquinate dehydratase.